A 332-amino-acid chain; its full sequence is Aspartate carbamoyltransferase catalytic subunit (332 aa).

Carbamoyl phosphate contacts are provided by R54 and T55. K82 serves as a coordination point for L-aspartate. Carbamoyl phosphate-binding residues include R104, H134, and Q137. Residues R175 and R230 each coordinate L-aspartate. The carbamoyl phosphate site is built by G271 and P272. Residues 312-332 are disordered; sequence GGPDGDSTTSPGSGPEGGTTP.

This sequence belongs to the aspartate/ornithine carbamoyltransferase superfamily. ATCase family. Heterododecamer (2C3:3R2) of six catalytic PyrB chains organized as two trimers (C3), and six regulatory PyrI chains organized as three dimers (R2).

The catalysed reaction is carbamoyl phosphate + L-aspartate = N-carbamoyl-L-aspartate + phosphate + H(+). The protein operates within pyrimidine metabolism; UMP biosynthesis via de novo pathway; (S)-dihydroorotate from bicarbonate: step 2/3. Its function is as follows. Catalyzes the condensation of carbamoyl phosphate and aspartate to form carbamoyl aspartate and inorganic phosphate, the committed step in the de novo pyrimidine nucleotide biosynthesis pathway. This Beutenbergia cavernae (strain ATCC BAA-8 / DSM 12333 / CCUG 43141 / JCM 11478 / NBRC 16432 / NCIMB 13614 / HKI 0122) protein is Aspartate carbamoyltransferase catalytic subunit.